A 145-amino-acid chain; its full sequence is HKREADFCSKGNLTNPEISPVEHYPPTNEIKEEATSWEEGNQSDYSINSLTEQIQGPYTPTPIMEYNHLIMQDNKYDVNACNSPLQETDVTKHALHKRDIDRRQRTQTQLKYDHRTNTGDKPLSCSECGKCFSTYHVLARHQKTH.

The interval 1 to 25 is disordered; it reads HKREADFCSKGNLTNPEISPVEHYP. Residues 123–145 form a C2H2-type zinc finger; the sequence is LSCSECGKCFSTYHVLARHQKTH.

Belongs to the krueppel C2H2-type zinc-finger protein family.

It localises to the nucleus. Its function is as follows. May be involved in transcriptional regulation. This Xenopus laevis (African clawed frog) protein is Oocyte zinc finger protein XlCOF8.4I.